A 425-amino-acid polypeptide reads, in one-letter code: MFKDYAKIHVKAGDGGNGCVAFRREKYVPYGGPSGGDGGRGGHVILRADGGLRTLVDFRYRTHYKAGRGTHGQGKNMHGRKGEDLVLRVPVGTEVRRAGDATLMADLTVDGQEYRVARGGRGGRGNARFAAANRRAPSFAEKGEPGEELWLELELKLLADVGLVGFPNAGKSTIISKVSAARPKIADYPFTTLEPHLGVVRVGEGESFVLADIPGLIEGAHRGAGLGHRFLRHVERTRVLIHVVDVSGREGRDPVADFEAINRELAAYDPRLAARPQLVAANKTDLPGARDNARRLAEAAGGRYEVFEISALTGEGLDRLIYRTYRLLETIPVEPAPAPIVPDERETDVTLFLVAREGNTYVVEGEGIERRVAMTDLDNPEAVQHLQELLVRIGVEDALRAEGIRPGDNVRIGRFEFEYSENPTG.

The 158-residue stretch at 1–158 (MFKDYAKIHV…LWLELELKLL (158 aa)) folds into the Obg domain. The 171-residue stretch at 159 to 329 (ADVGLVGFPN…LIYRTYRLLE (171 aa)) folds into the OBG-type G domain. Residues 165-172 (GFPNAGKS), 190-194 (FTTLE), 212-215 (DIPG), 282-285 (NKTD), and 310-312 (SAL) contribute to the GTP site. Residues S172 and T192 each coordinate Mg(2+). The OCT domain occupies 341–421 (VPDERETDVT…IGRFEFEYSE (81 aa)).

Belongs to the TRAFAC class OBG-HflX-like GTPase superfamily. OBG GTPase family. In terms of assembly, monomer. The cofactor is Mg(2+).

Its subcellular location is the cytoplasm. Functionally, an essential GTPase which binds GTP, GDP and possibly (p)ppGpp with moderate affinity, with high nucleotide exchange rates and a fairly low GTP hydrolysis rate. Plays a role in control of the cell cycle, stress response, ribosome biogenesis and in those bacteria that undergo differentiation, in morphogenesis control. This Desulforudis audaxviator (strain MP104C) protein is GTPase Obg.